The sequence spans 495 residues: Nuclear receptor subfamily 6 group A member 1 (495 aa).

Positions 1 to 34 are disordered; sequence MERDERPPSGGGGGGGSAGFLEPPAALPPPPRNG. Gly residues predominate over residues 9-18; it reads SGGGGGGGSA. The segment at residues 72–147 is a DNA-binding region (nuclear receptor); that stretch reads QRTCLICGDR…MGMNRKAIRE (76 aa). Zn(2+) is bound by residues Cys75, Cys78, Cys92, Cys95, Cys111, Cys117, Cys127, and Cys130. 2 consecutive NR C4-type zinc fingers follow at residues 75-95 and 111-135; these read CLIC…CEGC and CSRD…LLKC. Disordered stretches follow at residues 145–165 and 177–214; these read IRED…QISE and FEEE…LSSS. Basic and acidic residues predominate over residues 180-192; it reads EANHWSNHGDSDH. Residues 187-268 form a sufficient for interaction with UIMC1 region; it reads HGDSDHSSPG…RSLDPQSYSL (82 aa). Residues 202–214 show a composition bias toward low complexity; the sequence is SNQPSPGSTLSSS. The NR LBD domain maps to 264–495; that stretch reads QSYSLIHQLM…HSCKTSTVKE (232 aa).

This sequence belongs to the nuclear hormone receptor family. NR6 subfamily. In terms of assembly, homodimer. Interacts with UIMC1. As to expression, expressed in the germ cells of both the adult testis and ovary, being most abundant in spermatids.

It localises to the nucleus. Its function is as follows. Orphan nuclear receptor that binds to a response element containing the sequence 5'-TCAAGGTCA-3'. Acts as a regulator of embryonic stem cell pluripotency by mediating repression of POU5F1/OCT4: binds to the DR0 element within the POU5F1/OCT4 promoter and inhibits POU5F1/OCT4 expression during embryonic stem cell differentiation. Required to restrict POU5F1/OCT4 expression to the germ cell lineage. Involved in the regulation of gene expression in germ cell development during gametogenesis. The polypeptide is Nuclear receptor subfamily 6 group A member 1 (Nr6a1) (Mus musculus (Mouse)).